We begin with the raw amino-acid sequence, 499 residues long: Putative antiporter subunit mnhD2 (499 aa).

The next 14 helical transmembrane spans lie at 1–21 (MSNL…ILVF), 31–51 (ILSI…LIYV), 77–97 (LSLL…AYGF), 107–127 (FHLP…FLTS), 129–149 (LFNL…LVTL), 160–180 (IVYV…IGML), 208–228 (ISLV…FMWL), 239–259 (LAAL…IRFF), 272–292 (TLLV…VIAY), 307–327 (IGFI…GAIF), 329–349 (LAND…LVYM), 367–387 (FFGV…PFSG), 402–422 (GNYI…YSLF), and 449–469 (GLLS…PVVL).

It belongs to the CPA3 antiporters (TC 2.A.63) subunit D family. May form a heterooligomeric complex that consists of seven subunits: mnhA2, mnhB2, mnhC2, mnhD2, mnhE2, mnhF2 and mnhG2.

It localises to the cell membrane. This Staphylococcus epidermidis (strain ATCC 35984 / DSM 28319 / BCRC 17069 / CCUG 31568 / BM 3577 / RP62A) protein is Putative antiporter subunit mnhD2 (mnhD2).